The chain runs to 304 residues: UDP-N-acetylenolpyruvoylglucosamine reductase (304 aa).

An FAD-binding PCMH-type domain is found at 34 to 198 (IGGKADFLVW…LEVVFALRPG (165 aa)). The active site involves arginine 177. Residue serine 227 is the Proton donor of the active site. Residue glutamate 297 is part of the active site.

The protein belongs to the MurB family. FAD serves as cofactor.

Its subcellular location is the cytoplasm. It carries out the reaction UDP-N-acetyl-alpha-D-muramate + NADP(+) = UDP-N-acetyl-3-O-(1-carboxyvinyl)-alpha-D-glucosamine + NADPH + H(+). The protein operates within cell wall biogenesis; peptidoglycan biosynthesis. Cell wall formation. This Geobacillus kaustophilus (strain HTA426) protein is UDP-N-acetylenolpyruvoylglucosamine reductase.